The sequence spans 149 residues: Transcriptional repressor NrdR (149 aa).

A zinc finger lies at 3–34; sequence CPFCSENDTKVIDSRLVADGHQVRRRRQCLAC. Positions 49–139 constitute an ATP-cone domain; sequence PKVIKSNGNR…VYRSFEDIRE (91 aa).

It belongs to the NrdR family. Requires Zn(2+) as cofactor.

In terms of biological role, negatively regulates transcription of bacterial ribonucleotide reductase nrd genes and operons by binding to NrdR-boxes. The chain is Transcriptional repressor NrdR from Vibrio vulnificus (strain YJ016).